A 303-amino-acid chain; its full sequence is Probable porphobilinogen deaminase (303 aa).

Cys240 carries the post-translational modification S-(dipyrrolylmethanemethyl)cysteine.

Belongs to the HMBS family. The cofactor is dipyrromethane.

It carries out the reaction 4 porphobilinogen + H2O = hydroxymethylbilane + 4 NH4(+). It functions in the pathway porphyrin-containing compound metabolism; protoporphyrin-IX biosynthesis; coproporphyrinogen-III from 5-aminolevulinate: step 2/4. Its function is as follows. Tetrapolymerization of the monopyrrole PBG into the hydroxymethylbilane pre-uroporphyrinogen in several discrete steps. The chain is Probable porphobilinogen deaminase from Hyperthermus butylicus (strain DSM 5456 / JCM 9403 / PLM1-5).